A 178-amino-acid polypeptide reads, in one-letter code: ATP synthase subunit delta (178 aa).

Belongs to the ATPase delta chain family. F-type ATPases have 2 components, F(1) - the catalytic core - and F(0) - the membrane proton channel. F(1) has five subunits: alpha(3), beta(3), gamma(1), delta(1), epsilon(1). F(0) has three main subunits: a(1), b(2) and c(10-14). The alpha and beta chains form an alternating ring which encloses part of the gamma chain. F(1) is attached to F(0) by a central stalk formed by the gamma and epsilon chains, while a peripheral stalk is formed by the delta and b chains.

The protein resides in the cell membrane. Its function is as follows. F(1)F(0) ATP synthase produces ATP from ADP in the presence of a proton or sodium gradient. F-type ATPases consist of two structural domains, F(1) containing the extramembraneous catalytic core and F(0) containing the membrane proton channel, linked together by a central stalk and a peripheral stalk. During catalysis, ATP synthesis in the catalytic domain of F(1) is coupled via a rotary mechanism of the central stalk subunits to proton translocation. This protein is part of the stalk that links CF(0) to CF(1). It either transmits conformational changes from CF(0) to CF(1) or is implicated in proton conduction. This chain is ATP synthase subunit delta, found in Acetivibrio thermocellus (strain ATCC 27405 / DSM 1237 / JCM 9322 / NBRC 103400 / NCIMB 10682 / NRRL B-4536 / VPI 7372) (Clostridium thermocellum).